A 160-amino-acid chain; its full sequence is Probable prefoldin subunit 5 (160 aa).

Belongs to the prefoldin subunit alpha family. Heterohexamer of two PFD-alpha type and four PFD-beta type subunits.

Its function is as follows. Binds specifically to cytosolic chaperonin (c-CPN) and transfers target proteins to it. Binds to nascent polypeptide chain and promotes folding in an environment in which there are many competing pathways for nonnative proteins. The polypeptide is Probable prefoldin subunit 5 (pfdn5) (Dictyostelium discoideum (Social amoeba)).